The primary structure comprises 577 residues: 5'-nucleotidase (577 aa).

Positions 1–30 (MPRVPSASATGSSALLSLLCAFSLGRAAPF) are cleaved as a signal peptide. 4 residues coordinate Zn(2+): D39, H41, D86, and N118. N-linked (GlcNAc...) asparagine glycosylation occurs at N135. The Zn(2+) site is built by H221 and H244. A substrate-binding site is contributed by N246. 2 N-linked (GlcNAc...) asparagine glycosylation sites follow: N311 and N347. 2 disulfide bridges follow: C353–C358 and C365–C387. Substrate is bound at residue R354. 2 residues coordinate substrate: Q390 and R395. N-linked (GlcNAc...) asparagine glycosylation occurs at N403. F417 serves as a coordination point for substrate. C476 and C479 are joined by a disulfide. Substrate is bound at residue 500–506 (YIAEGGD). A lipid anchor (GPI-anchor amidated serine) is attached at S552. Residues 553–577 (ATLPIINLKIGLSLFAFLTWFLHCS) constitute a propeptide, removed in mature form.

This sequence belongs to the 5'-nucleotidase family. Homodimer. Zn(2+) serves as cofactor.

It localises to the cell membrane. It catalyses the reaction a ribonucleoside 5'-phosphate + H2O = a ribonucleoside + phosphate. Functionally, hydrolyzes extracellular nucleotides into membrane permeable nucleosides. This is 5'-nucleotidase from Diplobatis ommata (Ocellated electric ray).